Consider the following 577-residue polypeptide: Protein CBFA2T1 (577 aa).

The segment covering 1 to 10 has biased composition (basic and acidic residues); it reads MPDRTEKHST. Residues 1–87 form a disordered region; that stretch reads MPDRTEKHST…SSSSLANQQL (87 aa). Residue Ser-14 is modified to Phosphoserine. Residues 42–59 show a composition bias toward polar residues; the sequence is SSFTPTTLTNGTSHSPTA. Residues 68–87 show a composition bias toward low complexity; the sequence is NGFSNGPSSSSSSSLANQQL. The TAFH domain maps to 93–188; that stretch reads ARQLSKLKRF…NPAQYLAQHE (96 aa). Residues 203–271 are disordered; that stretch reads SELLLDVNEN…LPHPTPPPPQ (69 aa). Positions 211–237 are enriched in basic and acidic residues; the sequence is ENGKRRTPDRTKENGFDREPLHSEHPS. Over residues 244 to 258 the composition is skewed to polar residues; that stretch reads SPGQRYSPNNGLSYQ. Positions 262 to 271 are enriched in pro residues; it reads LPHPTPPPPQ. An important for oligomerization region spans residues 310–356; it reads QEEMIDHRLTDREWAEEWKHLDHLLNCIMDMVEKTRRSLTVLRRCQE. The tract at residues 310–356 is nervy homology region 2 (NHR2); that stretch reads QEEMIDHRLTDREWAEEWKHLDHLLNCIMDMVEKTRRSLTVLRRCQE. The segment at 374-396 is disordered; that stretch reads DLKKGGSSSSSHSRQQSPVNPDP. Low complexity predominate over residues 380-390; sequence SSSSSHSRQQS. Ser-390 carries the phosphoserine modification. The interval 416–465 is nervy homology region 3 (NHR3); the sequence is EEIWKKAEEAVNEVKRQAMTELQKAVSEAERKAHDMITTERAKMERTVAE. The Zn(2+) site is built by Cys-488, Cys-491, Cys-499, Cys-502, Cys-508, Cys-512, His-520, and Cys-524. The MYND-type zinc finger occupies 488–524; the sequence is CWNCGRKASETCSGCNTARYCGSFCQHKDWEKHHHIC. Positions 529–577 are disordered; the sequence is QAPQQGDTPAVSSSVTPSSGAGSPMDTPPAATPRSTTPGTPSTIETTPR. 2 stretches are compositionally biased toward low complexity: residues 536–553 and 560–577; these read TPAV…GSPM and TPRS…TTPR.

This sequence belongs to the CBFA2T family. In terms of assembly, homotetramer. Heterotetramer with CBFA2T2 and CBFA2T3. Interacts with TCF12, SIN3A, HDAC1, HDAC2, HDAC3, NCOR1 and NCOR2. Interacts with ATN1 (via its N-terminus); the interaction enhances the transcriptional repression.

It is found in the nucleus. In terms of biological role, transcriptional corepressor which facilitates transcriptional repression via its association with DNA-binding transcription factors and recruitment of other corepressors and histone-modifying enzymes. Can repress the expression of MMP7 in a ZBTB33-dependent manner. Can repress transactivation mediated by TCF12. Acts as a negative regulator of adipogenesis. The protein is Protein CBFA2T1 (Runx1t1) of Mus musculus (Mouse).